Reading from the N-terminus, the 456-residue chain is Adenylosuccinate lyase (456 aa).

N(6)-(1,2-dicarboxyethyl)-AMP-binding positions include 15–16 (RY), 90–92 (NHD), and 122–123 (TS). His-171 (proton donor/acceptor) is an active-site residue. Gln-248 contacts N(6)-(1,2-dicarboxyethyl)-AMP. Ser-296 functions as the Proton donor/acceptor in the catalytic mechanism. N(6)-(1,2-dicarboxyethyl)-AMP contacts are provided by residues Ser-297, 302–304 (KVN), Asn-310, Arg-336, and 341–345 (STVLR).

It belongs to the lyase 1 family. Adenylosuccinate lyase subfamily. In terms of assembly, homotetramer.

It carries out the reaction N(6)-(1,2-dicarboxyethyl)-AMP = fumarate + AMP. The enzyme catalyses (2S)-2-[5-amino-1-(5-phospho-beta-D-ribosyl)imidazole-4-carboxamido]succinate = 5-amino-1-(5-phospho-beta-D-ribosyl)imidazole-4-carboxamide + fumarate. It catalyses the reaction (2S)-2-amino-2'-deoxyadenylo-succinate = dZMP + fumarate. The protein operates within purine metabolism; AMP biosynthesis via de novo pathway; AMP from IMP: step 2/2. Its pathway is purine metabolism; IMP biosynthesis via de novo pathway; 5-amino-1-(5-phospho-D-ribosyl)imidazole-4-carboxamide from 5-amino-1-(5-phospho-D-ribosyl)imidazole-4-carboxylate: step 2/2. It functions in the pathway purine metabolism. Functionally, catalyzes two reactions in de novo purine nucleotide biosynthesis. Catalyzes the breakdown of 5-aminoimidazole- (N-succinylocarboxamide) ribotide (SAICAR or 2-[5-amino-1-(5-phospho-beta-D-ribosyl)imidazole-4-carboxamido]succinate) to 5-aminoimidazole-4-carboxamide ribotide (AICAR or 5-amino-1-(5-phospho-beta-D-ribosyl)imidazole-4-carboxamide) and fumarate, and of adenylosuccinate (ADS or N(6)-(1,2-dicarboxyethyl)-AMP) to adenosine monophosphate (AMP) and fumarate. (Microbial infection) Catalyzes the conversion of 2-amino-2'-deoxyadenylo-succinate to dZMP and fumarate, when the bacterium is infected by a phage that produces the substrate of this reaction, a step in the synthesis of dZTP (2-amino-2'-deoxyadenosine 5'-triphosphate), which is a nucleotide then used by the phage as a DNA polymerase substrate. This is Adenylosuccinate lyase from Vibrio cholerae serotype O1 (strain ATCC 39541 / Classical Ogawa 395 / O395).